Reading from the N-terminus, the 1477-residue chain is Oligomycin resistance ATP-dependent permease YOR1 (1477 aa).

The interval 1-48 (MTITVGDAVSETELENKSQNVVLSPKASASSDISTDVDKDTSSSWDDK) is disordered. Topologically, residues 1 to 206 (MTITVGDAVS…RALLFTFKKQ (206 aa)) are cytoplasmic. Phosphoserine is present on residues Ser10 and Ser24. Basic and acidic residues predominate over residues 36–48 (DVDKDTSSSWDDK). Residue Thr53 is modified to Phosphothreonine. The Diacidic ER export motif DxE motif lies at 71–73 (DIE). Residues 207 to 227 (YFMSIVFAILANCTSGFNPMI) traverse the membrane as a helical segment. In terms of domain architecture, ABC transmembrane type-1 1 spans 207–493 (YFMSIVFAIL…LPIAIGTGID (287 aa)). Over 228–249 (TKRLIEFVEEKAIFHSMHVNKG) the chain is Extracellular. A helical transmembrane segment spans residues 250-270 (IGYAIGACLMMFVNGLTFNHF). Topologically, residues 271-328 (FHTSQLTGVQAKSILTKAAMKKMFNASNYARHCFPNGKVTSFVTTDLARIEFALSFQP) are cytoplasmic. The chain crosses the membrane as a helical span at residues 329-349 (FLAGFPAILAICIVLLIVNLG). Residues 350–357 (PIALVGIG) are Extracellular-facing. Residues 358–370 (IFFGGFFISLFAF) traverse the membrane as a helical segment. Over 371 to 433 (KLILGFRIAA…KVRKMQLSRN (63 aa)) the chain is Cytoplasmic. Residues 434-454 (FLIAMAMSLPSIASLVTFLAM) form a helical membrane-spanning segment. Over 455–478 (YKVNKGGRQPGNIFASLSLFQVLS) the chain is Extracellular. The chain crosses the membrane as a helical span at residues 479 to 499 (LQMFFLPIAIGTGIDMIIGLG). Topologically, residues 500–615 (RLQSLLEAPE…DLNFDIKKGE (116 aa)) are cytoplasmic. The interval 552-595 (KGEAKDEGKKNKKKRKDTWGKPSASTNKAKRLDNMLKDRDGPED) is disordered. Over residues 581-595 (KRLDNMLKDRDGPED) the composition is skewed to basic and acidic residues. The ABC transporter 1 domain occupies 581–808 (KRLDNMLKDR…NQTLINLLQF (228 aa)). Residues 616-636 (FIMITGPIGTGKSSLLNAMAG) form a helical membrane-spanning segment. Residue 621–628 (GPIGTGKS) coordinates ATP. The Extracellular segment spans residues 637 to 892 (SMRKTDGKVE…EYIKAAVGKW (256 aa)). Residues Asn661, Asn759, and Asn799 are each glycosylated (N-linked (GlcNAc...) asparagine). A helical transmembrane segment spans residues 893–913 (GFIALPLYAILVVGTTFCSLF). Residues 897–1175 (LPLYAILVVG…ILRAMTQTEN (279 aa)) form the ABC transmembrane type-1 2 domain. Topologically, residues 914–940 (SSVWLSYWTENKFKNRPPSFYMGLYSF) are cytoplasmic. The helical transmembrane segment at 941-961 (FVFAAFIFMNGQFTILCAMGI) threads the bilayer. Residues 962-1027 (MASKWLNLRA…ANIVGVCVMC (66 aa)) are Extracellular-facing. The chain crosses the membrane as a helical span at residues 1028–1048 (IVYLPWFAIAIPFLLVIFVLI). Residues 1049–1117 (ADHYQSSGRE…GYLVVVLQRW (69 aa)) are Cytoplasmic-facing. A helical membrane pass occupies residues 1118–1138 (VGIFLDMVAIAFALIITLLCV). The Extracellular segment spans residues 1139-1141 (TRA). A helical transmembrane segment spans residues 1142–1162 (FPISAASVGVLLTYVLQLPGL). Residues 1163-1477 (LNTILRAMTQ…IVENDFENRS (315 aa)) are Cytoplasmic-facing. Residues 1213–1464 (IIFENVDFAY…EDSIFRSMCS (252 aa)) enclose the ABC transporter 2 domain. 1247 to 1254 (GRTGAGKS) contributes to the ATP binding site.

This sequence belongs to the ABC transporter superfamily. ABCC family. Conjugate transporter (TC 3.A.1.208) subfamily.

The protein localises to the cell membrane. It carries out the reaction a 1,2-diacyl-sn-glycero-3-phosphoethanolamine(in) + ATP + H2O = a 1,2-diacyl-sn-glycero-3-phosphoethanolamine(out) + ADP + phosphate + H(+). It catalyses the reaction Cd(2+)(in) + ATP + H2O = Cd(2+)(out) + ADP + phosphate + H(+). The enzyme catalyses an S-substituted glutathione(in) + ATP + H2O = an S-substituted glutathione(out) + ADP + phosphate + H(+). Functionally, functions as a pleiotropic drug pump at the plasma membrane to clear toxic substances from the cytosol. Organic anion transporter involved in the detoxification of a wide range of toxic environmental organic anions that contain carboxyl groups. Required for tolerance to reveromycin A, tautomycin and leptomycin B. Required for oligomycin resistance. Required for rhodamine B resistance. Mediates the ATP-dependent efflux of rhodamine B. Involved in cadmium detoxification. Displays an energy-dependent efflux of cadmium and glutathione, suggesting that YOR1 transports both compounds as a bis-glutathionato-cadmium Cd-(GS)(2) complex. Confers resistance to rhodamine 6G and to doxorubicin. This is Oligomycin resistance ATP-dependent permease YOR1 from Saccharomyces cerevisiae (strain ATCC 204508 / S288c) (Baker's yeast).